The sequence spans 121 residues: Large ribosomal subunit protein uL18 (121 aa).

The protein belongs to the universal ribosomal protein uL18 family. In terms of assembly, part of the 50S ribosomal subunit; part of the 5S rRNA/L5/L18/L25 subcomplex. Contacts the 5S and 23S rRNAs.

Its function is as follows. This is one of the proteins that bind and probably mediate the attachment of the 5S RNA into the large ribosomal subunit, where it forms part of the central protuberance. The protein is Large ribosomal subunit protein uL18 of Mesomycoplasma hyopneumoniae (strain 232) (Mycoplasma hyopneumoniae).